A 308-amino-acid chain; its full sequence is Dioxygenase peniF (308 aa).

Residues His144 and His225 each contribute to the Fe cation site.

It belongs to the PhyH family. As to quaternary structure, homodimer. It depends on Fe cation as a cofactor.

Dioxygenase; part of the gene cluster that mediates the biosynthesis of penifulvin A, a potent insecticidal sesquiterpene that features a [5.5.5.6]dioxafenestrane ring. The first step of the pathway is performed by the sesquiterpene cyclase peniA that generates the angular triquinane scaffold silphinene via cyclization of the linear farnesyl pyrophosphate (FPP). The cytochrome P450 monooxygenase peniB and the flavin-dependent monooxygenase peniC then catalyze a series of oxidation reactions to transform silphinene into penifulvin A. The dioxygenases peniD and peniF, as well as the acetyltransferase peniE, do not seem to be involved in the biosynthesis of penifulvin A. In Penicillium patulum (Penicillium griseofulvum), this protein is Dioxygenase peniF.